A 326-amino-acid chain; its full sequence is Ficolin-1 (326 aa).

The N-terminal stretch at 1-29 is a signal peptide; it reads MELSRVAVALGPTGQLLLFLSFQTLAAQA. The 39-residue stretch at 55–93 folds into the Collagen-like domain; sequence GLPGAAGPKGEAGANGPKGERGSPGVVGKAGPAGPKGDR. Low complexity-rich tracts occupy residues 61 to 71 and 78 to 89; these read GPKGEAGANGP and PGVVGKAGPAGP. The interval 61–110 is disordered; sequence GPKGEAGANGPKGERGSPGVVGKAGPAGPKGDRGEKGARGEKGEPGQLQS. Over residues 90 to 104 the composition is skewed to basic and acidic residues; that stretch reads KGDRGEKGARGEKGE. Positions 109 to 326 constitute a Fibrinogen C-terminal domain; it reads QSCATGPRTC…QVSEMKVRLT (218 aa). Intrachain disulfides connect cysteine 111–cysteine 139 and cysteine 118–cysteine 146. The interval 115 to 154 is a domain; contributes to trimerization; sequence PRTCKELLTRGHFLSGWHTIYLPDCQPLTVLCDMDTDGGG. The segment at 155–243 is b domain; contributes to trimerization; that stretch reads WTVFQRRSDG…LVLGGFLEGN (89 aa). Positions 262 and 264 each coordinate Ca(2+). N-linked (GlcNAc...) asparagine glycosylation is present at asparagine 265. Cysteine 270 and cysteine 283 are disulfide-bonded. An a carbohydrate-binding site is contributed by 282-284; that stretch reads ACH. Asparagine 313 carries N-linked (GlcNAc...) asparagine glycosylation. A p domain region spans residues 317–326; that stretch reads QVSEMKVRLT.

The protein belongs to the ficolin lectin family. In terms of assembly, homotrimer. Interacts with elastin/ELN. Interacts (via Fibrinogen C-terminal domain) with FFAR2. Interacts with CRP; may regulate monocyte activation by FCN1. As to expression, most abundantly expressed in placenta and lung.

It is found in the secreted. It localises to the cell membrane. Extracellular lectin functioning as a pattern-recognition receptor in innate immunity. Binds the sugar moieties of pathogen-associated molecular patterns (PAMPs) displayed on microbes and activates the lectin pathway of the complement system. May also activate monocytes through a G protein-coupled receptor, FFAR2, inducing the secretion of interleukin-8/IL-8. Binds preferentially to 9-O-acetylated 2-6-linked sialic acid derivatives and to various glycans containing sialic acid engaged in a 2-3 linkage. The protein is Ficolin-1 (FCN1) of Sus scrofa (Pig).